A 56-amino-acid polypeptide reads, in one-letter code: Sec-independent protein translocase protein TatA (56 aa).

The chain crosses the membrane as a helical span at residues 1–21 (MALGPWQIFLILVIILVLFGA).

This sequence belongs to the TatA/E family. The Tat system comprises two distinct complexes: a TatABC complex, containing multiple copies of TatA, TatB and TatC subunits, and a separate TatA complex, containing only TatA subunits. Substrates initially bind to the TatABC complex, which probably triggers association of the separate TatA complex to form the active translocon.

It is found in the cell inner membrane. Functionally, part of the twin-arginine translocation (Tat) system that transports large folded proteins containing a characteristic twin-arginine motif in their signal peptide across membranes. TatA could form the protein-conducting channel of the Tat system. The chain is Sec-independent protein translocase protein TatA from Ehrlichia ruminantium (strain Welgevonden).